The following is a 223-amino-acid chain: DNA-directed RNA polymerase III subunit RPC7 (223 aa).

The tract at residues 110–223 (MMPRNKCKKA…SDDNMDEATY (114 aa)) is disordered. Positions 114-125 (NKCKKAGPKPKK) are enriched in basic residues. Thr133 carries the phosphothreonine modification. Residues 140 to 155 (DVLKKMEELEKRGDGE) are compositionally biased toward basic and acidic residues. Ser157 is subject to Phosphoserine. Positions 164–173 (KEGSKEKSKE) are enriched in basic and acidic residues. Composition is skewed to acidic residues over residues 174–198 (GDDD…EEND) and 205–223 (EDGD…EATY).

This sequence belongs to the eukaryotic RPC7 RNA polymerase subunit family. In terms of assembly, component of the RNA polymerase III complex consisting of 17 subunits: a ten-subunit horseshoe-shaped catalytic core composed of POLR3A/RPC1, POLR3B/RPC2, POLR1C/RPAC1, POLR1D/RPAC2, POLR3K/RPC10, POLR2E/RPABC1, POLR2F/RPABC2, POLR2H/RPABC3, POLR2K/RPABC4 and POLR2L/RPABC5; a mobile stalk composed of two subunits POLR3H/RPC8 and CRCP/RPC9, protruding from the core and functioning primarily in transcription initiation; and additional subunits homologous to general transcription factors of the RNA polymerase II machinery, POLR3C/RPC3-POLR3F/RPC6-POLR3G/RPC7 heterotrimer required for transcription initiation and POLR3D/RPC4-POLR3E/RPC5 heterodimer involved in both transcription initiation and termination. Directly interacts with POLR3C/RPC62. Also found in a trimeric complex with POLR3C/RPC3 and POLR3GL. Barely detectable in differentiated tissues. Expressed in embryonic stem cells and in other dividing cells, such as some tumor cell lines.

It localises to the nucleus. Its subcellular location is the cytoplasm. In terms of biological role, DNA-dependent RNA polymerase catalyzes the transcription of DNA into RNA using the four ribonucleoside triphosphates as substrates. Specific peripheric component of RNA polymerase III (Pol III) which synthesizes small non-coding RNAs including 5S rRNA, snRNAs, tRNAs and miRNAs from at least 500 distinct genomic loci. Acts as a long tether that bridges POLR3C/RPC3-POLR3F/RPC6-POLR3G/RPC7 heterotrimer and the mobile stalk of Pol III, coordinating the dynamics of Pol III stalk and clamp modules during the transition from apo to elongation state. Pol III exists as two alternative complexes defined by the mutually exclusive incorporation of subunit POLR3G/RPC7alpha or POLR3GL/RPC7beta. POLR3G/RPC7alpha modulates Pol III transcriptome by specifically enhancing the transcription of snaR-A non-coding RNAs. At resting state, occupies the active site of apo Pol III and keeps Pol III in an autoinhibitory mode, preventing non-specific transcription. Pol III plays a key role in sensing and limiting infection by intracellular bacteria and DNA viruses. Acts as a nuclear and cytosolic DNA sensor involved in innate immune response. Can sense non-self dsDNA that serves as template for transcription into dsRNA. The non-self RNA polymerase III transcripts, such as Epstein-Barr virus-encoded RNAs (EBERs), induce type I interferon and NF-kappa-B through the RIG-I pathway. This chain is DNA-directed RNA polymerase III subunit RPC7, found in Homo sapiens (Human).